Consider the following 146-residue polypeptide: 1,4-dihydroxy-2-naphthoyl-CoA hydrolase (146 aa).

Residue Asp15 is part of the active site.

Belongs to the 4-hydroxybenzoyl-CoA thioesterase family. DHNA-CoA hydrolase subfamily.

The catalysed reaction is 1,4-dihydroxy-2-naphthoyl-CoA + H2O = 1,4-dihydroxy-2-naphthoate + CoA + H(+). Its pathway is cofactor biosynthesis; phylloquinone biosynthesis. It participates in quinol/quinone metabolism; 1,4-dihydroxy-2-naphthoate biosynthesis; 1,4-dihydroxy-2-naphthoate from chorismate: step 7/7. Functionally, catalyzes the hydrolysis of 1,4-dihydroxy-2-naphthoyl-CoA (DHNA-CoA) to 1,4-dihydroxy-2-naphthoate (DHNA), a reaction involved in phylloquinone (vitamin K1) biosynthesis. The protein is 1,4-dihydroxy-2-naphthoyl-CoA hydrolase of Picosynechococcus sp. (strain ATCC 27264 / PCC 7002 / PR-6) (Agmenellum quadruplicatum).